A 231-amino-acid polypeptide reads, in one-letter code: Large ribosomal subunit protein uL1 (231 aa).

It belongs to the universal ribosomal protein uL1 family. In terms of assembly, part of the 50S ribosomal subunit.

Its function is as follows. Binds directly to 23S rRNA. The L1 stalk is quite mobile in the ribosome, and is involved in E site tRNA release. Protein L1 is also a translational repressor protein, it controls the translation of the L11 operon by binding to its mRNA. The protein is Large ribosomal subunit protein uL1 of Thiobacillus denitrificans (strain ATCC 25259 / T1).